Reading from the N-terminus, the 234-residue chain is Sugar fermentation stimulation protein A (234 aa).

Positions 201–220 (LLSEAQNKGVEVLAYKAELS) form a DNA-binding region, H-T-H motif.

The protein belongs to the SfsA family.

Its function is as follows. Binds to DNA non-specifically. Could be a regulatory factor involved in maltose metabolism. The sequence is that of Sugar fermentation stimulation protein A from Salmonella typhi.